A 2013-amino-acid chain; its full sequence is Centrosomal protein 224 (2013 aa).

HEAT repeat units follow at residues 115–153 (TIEA…ALKT), 158–196 (QIPV…WIGK), 200–238 (PLIS…EAAK), 348–386 (TSYV…KSIS), and 427–465 (TKVT…IIGE). The interval 512–557 (PVSSSNKKPAAATGNSKSSSTTTPTGRSSNSSPLPPPPSSSDDIKN) is disordered. Over residues 524–543 (TGNSKSSSTTTPTGRSSNSS) the composition is skewed to low complexity. HEAT repeat units lie at residues 724 to 762 (IQQL…NIGA), 816 to 854 (VDIS…DANR), 857 to 895 (QPKL…AMGG), 899 to 937 (EKHA…SDLG), and 977 to 1015 (PSEI…QIPL). The disordered stretch occupies residues 1043–1109 (KTGQPIPPPS…QQQQRRSILQ (67 aa)). Residues 1053–1106 (KTKQSTSSSSSSSSTTSQQSSTPSSPQPIRQQQQQQQQQPTQPQQQQQQQQRRS) show a composition bias toward low complexity. HEAT repeat units follow at residues 1240–1279 (EYEA…LCLP), 1281–1314 (VLFR…KNGA), and 1317–1353 (CGNL…HIKD). Low complexity-rich tracts occupy residues 1372 to 1406 (NNNN…QQQQ), 1695 to 1735 (NRIS…INSS), and 1746 to 1796 (SNNT…TLST). 4 disordered regions span residues 1372 to 1413 (NNNN…SLST), 1695 to 1809 (NRIS…YSGK), 1905 to 1949 (NQPS…IAPQ), and 1966 to 1995 (TLNP…DLNS). A compositionally biased stretch (basic and acidic residues) spans 1799-1809 (INKEPRDYSGK). The segment covering 1913 to 1939 (NNNNNNNNNNNNNNNNNINNNNNNNNN) has biased composition (low complexity). A compositionally biased stretch (polar residues) spans 1940–1949 (SGGNENIAPQ). Positions 1967–1995 (LNPDQNSGSNNNNSHQNSPSTSSSNDLNS) are enriched in low complexity.

Belongs to the TOG/XMAP215 family. Interacts with eb1 at the microtubule tip, centrosome and kinetochore. Interacts with lis1 in the cortical attachment of microtubules.

It is found in the cytoplasm. The protein localises to the cytoskeleton. Its subcellular location is the microtubule organizing center. The protein resides in the centrosome. It localises to the chromosome. It is found in the centromere. The protein localises to the kinetochore. Functionally, involved in regulation of microtubule dynamics. Regulates the interaction of microtubules tips with the centrosome and cell cortex. This chain is Centrosomal protein 224 (mtaA), found in Dictyostelium discoideum (Social amoeba).